Reading from the N-terminus, the 544-residue chain is Protein kinase dsk1 (544 aa).

A Protein kinase domain is found at 81–516 (YVVERKLGWG…AGYMSNSPWL (436 aa)). Residues 87–95 (LGWGHFSTV) and lysine 110 each bind ATP. The active-site Proton acceptor is aspartate 214. Disordered regions lie at residues 235 to 299 (PATT…SSPF) and 316 to 341 (ISLRDSQKHNSHPNSPFSSGDNSLIL). Residues 237–254 (TTSSPTSNTSSSKTRNNT) show a composition bias toward low complexity. Composition is skewed to polar residues over residues 281–299 (KNPTKNSKPAGQVIPSSPF) and 327–337 (HPNSPFSSGDN).

This sequence belongs to the protein kinase superfamily. Ser/Thr protein kinase family. Post-translationally, phosphorylated on Ser residue(s).

The protein localises to the cytoplasm. It localises to the nucleus. It carries out the reaction L-seryl-[protein] + ATP = O-phospho-L-seryl-[protein] + ADP + H(+). It catalyses the reaction L-threonyl-[protein] + ATP = O-phospho-L-threonyl-[protein] + ADP + H(+). Its function is as follows. May play an important role in mitotic control by altering cellular location, degree of phosphorylation and kinase activity. Abundant expression accelerates the exit when cells are in M-phase and also delays the entry into mitosis when cells are in G2. Phosphorylates prp2 in vitro and so may have a role in co-ordinating pre-mRNA splicing with the progression of the cell division cycle. The chain is Protein kinase dsk1 (dsk1) from Schizosaccharomyces pombe (strain 972 / ATCC 24843) (Fission yeast).